A 470-amino-acid polypeptide reads, in one-letter code: Choline/ethanolamine transporter flvcr2a (470 aa).

Residues 1–23 are Cytoplasmic-facing; the sequence is MCDKADNHIDVQPEGNLEVSSVS. The chain crosses the membrane as a helical span at residues 24 to 48; that stretch reads STRLYRRRWVILLLFSSYSLCNAFQ. The choline site is built by N45, A46, and W49. The Extracellular portion of the chain corresponds to 49-66; that stretch reads WIQYGIINNIFMKFYQVS. A helical transmembrane segment spans residues 67–94; sequence SFAVDWLSMVYMLTYIPFIFPVTWLLER. Topologically, residues 95–96 are cytoplasmic; sequence KG. Residues 97 to 116 form a helical membrane-spanning segment; the sequence is LRVVALLAASINCAGTWIKV. Topologically, residues 117 to 123 are extracellular; that stretch reads ASVQPSL. A helical transmembrane segment spans residues 124–152; it reads FWVTMLGQFACSCAQVFILGMPSQVASVW. Residues Q138 and L142 each contribute to the choline site. Residues 153–157 lie on the Cytoplasmic side of the membrane; that stretch reads FGSDE. The helical transmembrane segment at 158-183 threads the bilayer; it reads VSTACAIGVFGNQLGIAIGFLVPPVL. Residues 184–188 lie on the Extracellular side of the membrane; it reads VPNVE. A helical membrane pass occupies residues 189 to 218; that stretch reads DMGELAEHISIMFYITAAVATLIFLLVVFV. The Cytoplasmic portion of the chain corresponds to 219–254; the sequence is FQEKPETPPSLAQVALRNMPTGQHSYLASIARLMCN. Residues 255-285 form a helical membrane-spanning segment; sequence KPFILLLISYGLNVGSFYAVSTLLNRMIIEH. Y272 contacts choline. Residues 286 to 289 are Extracellular-facing; the sequence is YPGE. The helical transmembrane segment at 290 to 318 threads the bilayer; that stretch reads EVNAGRIGLTLVVAGVVGSLICGVWLDKT. The Cytoplasmic segment spans residues 319–320; sequence KT. Residues 321–343 traverse the membrane as a helical segment; that stretch reads YKQTTLSVYLLSFVGMLIYSFTL. At 344–346 the chain is on the extracellular side; it reads NLG. Residues 347–376 traverse the membrane as a helical segment; sequence HLWLVFLTSGVLGFFMTGYLPLGFEFAVEL. The Cytoplasmic portion of the chain corresponds to 377–384; sequence TYPESEGT. The chain crosses the membrane as a helical span at residues 385 to 410; it reads SSGLLNCSAQVFGIAFTIIQGKIIDH. Choline is bound at residue Q394. Residues 411-412 are Extracellular-facing; it reads FG. The chain crosses the membrane as a helical span at residues 413-435; the sequence is TLAGNIFLCVFLLIGSIMTAFIK. Residues 436 to 470 are Cytoplasmic-facing; it reads SDLRRQKANQETGGNADSSVHPQHGETLPVKEVKM. Residues 445-456 are compositionally biased toward polar residues; the sequence is QETGGNADSSVH. The interval 445 to 470 is disordered; the sequence is QETGGNADSSVHPQHGETLPVKEVKM.

The protein belongs to the major facilitator superfamily. Feline leukemia virus subgroup C receptor (TC 2.A.1.28.1) family.

The protein localises to the cell membrane. It is found in the mitochondrion membrane. Its subcellular location is the endoplasmic reticulum membrane. The enzyme catalyses choline(out) = choline(in). The catalysed reaction is ethanolamine(in) = ethanolamine(out). It catalyses the reaction heme b(in) = heme b(out). Choline uniporter that specifically mediates choline uptake at the blood-brain-barrier. Responsible for the majority of choline uptake across the blood-brain-barrier from the circulation into the brain. Choline, a nutrient critical for brain development, is a precursor of phosphatidylcholine, as well as betaine. Also mediates transport of ethanolamine. Choline and ethanolamine transport is not coupled with proton transport and is exclusively driven by the choline gradient across the plasma membrane. Also acts as a heme b transporter. This chain is Choline/ethanolamine transporter flvcr2a, found in Danio rerio (Zebrafish).